The sequence spans 967 residues: Serine/threonine-protein kinase 10 (967 aa).

2 positions are modified to phosphoserine: S13 and S20. Positions W36–V294 constitute a Protein kinase domain. ATP-binding positions include L42–V50 and K65. The Proton acceptor role is filled by D157. An activation segment region spans residues D175–G224. T185 carries the post-translational modification Phosphothreonine; by autocatalysis. The residue at position 191 (S191) is a Phosphoserine; by autocatalysis. Disordered stretches follow at residues E317 to S454 and G468 to Y498. Polar residues-rich tracts occupy residues N339–T364, P378–P393, and T431–S454. A phosphoserine mark is found at S438, S450, S454, and S485. Residues D486–Y498 are compositionally biased toward polar residues. A phosphoserine mark is found at S514 and S549. 2 disordered regions span residues I827–M866 and L902–S967. Basic and acidic residues-rich tracts occupy residues E835–M866 and L902–T947. T951 is modified (phosphothreonine).

It belongs to the protein kinase superfamily. STE Ser/Thr protein kinase family. STE20 subfamily. Homodimer; homodimerization is required for activation segment autophosphorylation. Post-translationally, autophosphorylates following homodimerization, leading to activation of the protein.

The protein resides in the cell membrane. It catalyses the reaction L-seryl-[protein] + ATP = O-phospho-L-seryl-[protein] + ADP + H(+). It carries out the reaction L-threonyl-[protein] + ATP = O-phospho-L-threonyl-[protein] + ADP + H(+). With respect to regulation, inhibited by the pyrrole-indolinone inhibitor SU11274 (K00593): intercalates between the ATP-binding Lys-65 and alpha-C glutamate (Glu-81), resulting in a partial disordering of the lysine side chain. Also specifically inhibited by erlotinib. Slightly inhibited by gefitinib. In terms of biological role, serine/threonine-protein kinase involved in regulation of lymphocyte migration. Phosphorylates MSN, and possibly PLK1. Involved in regulation of lymphocyte migration by mediating phosphorylation of ERM proteins such as MSN. Acts as a negative regulator of MAP3K1/MEKK1. May also act as a cell cycle regulator by acting as a polo kinase kinase: mediates phosphorylation of PLK1 in vitro; however such data require additional evidences in vivo. The chain is Serine/threonine-protein kinase 10 (Stk10) from Rattus norvegicus (Rat).